Reading from the N-terminus, the 115-residue chain is MNLMLALTVNTLLTALLTIIMFWLPQLNSYAEKANPYECGFDPLNPARIPFSMKFFLVAITFLLFDLEIALLLSLPWALQTANLPTMIKTSIMFITILALSLAYEWTQKGLDWTE.

Helical transmembrane passes span 3 to 23 (LMLA…IMFW), 55 to 75 (FFLV…LLSL), and 84 to 104 (LPTM…SLAY).

This sequence belongs to the complex I subunit 3 family. In terms of assembly, core subunit of respiratory chain NADH dehydrogenase (Complex I) which is composed of 45 different subunits. Interacts with TMEM186. Interacts with TMEM242.

Its subcellular location is the mitochondrion inner membrane. It carries out the reaction a ubiquinone + NADH + 5 H(+)(in) = a ubiquinol + NAD(+) + 4 H(+)(out). In terms of biological role, core subunit of the mitochondrial membrane respiratory chain NADH dehydrogenase (Complex I) which catalyzes electron transfer from NADH through the respiratory chain, using ubiquinone as an electron acceptor. Essential for the catalytic activity of complex I. This chain is NADH-ubiquinone oxidoreductase chain 3, found in Papio hamadryas (Hamadryas baboon).